Reading from the N-terminus, the 274-residue chain is Large ribosomal subunit protein uL2cz/uL2cy (274 aa).

Disordered regions lie at residues 1–33 (MAIH…LIYG) and 223–265 (MNPV…KYND).

It belongs to the universal ribosomal protein uL2 family. In terms of assembly, part of the 50S ribosomal subunit.

It localises to the plastid. It is found in the chloroplast. The protein is Large ribosomal subunit protein uL2cz/uL2cy (rpl2-A) of Pelargonium hortorum (Common geranium).